A 1163-amino-acid polypeptide reads, in one-letter code: Leptin receptor (1163 aa).

An N-terminal signal peptide occupies residues 1–21; sequence MICQKFCVVLLHWEFICVITA. The Extracellular portion of the chain corresponds to 22–837; sequence FNLSYPITPW…QDNTEKHQND (816 aa). 7 N-linked (GlcNAc...) asparagine glycosylation sites follow: asparagine 23, asparagine 41, asparagine 56, asparagine 71, asparagine 79, asparagine 96, and asparagine 114. 2 disulfides stabilise this stretch: cysteine 37-cysteine 88 and cysteine 87-cysteine 97. Disulfide bonds link cysteine 129-cysteine 140 and cysteine 184-cysteine 194. N-linked (GlcNAc...) asparagine glycans are attached at residues asparagine 185, asparagine 204, asparagine 274, asparagine 345, and asparagine 395. Residues 237-331 form the Fibronectin type-III 1 domain; that stretch reads PPLGLRMEIT…TPHVFTTQDV (95 aa). 2 disulfides stabilise this stretch: cysteine 350–cysteine 410 and cysteine 411–cysteine 416. N-linked (GlcNAc...) asparagine glycosylation is present at asparagine 431. Intrachain disulfides connect cysteine 434–cysteine 445, cysteine 471–cysteine 526, and cysteine 486–cysteine 496. The interval 465–482 is leptin-binding; it reads RRSSLYCFDIPSIHPISK. Fibronectin type-III domains lie at 537–632, 637–730, and 738–831; these read PPSS…TVVM, PMRG…LTFS, and IVQS…QDNT. The WSXWS motif motif lies at 620–624; it reads WSNWS. Asparagine 622, asparagine 657, asparagine 668, asparagine 686, asparagine 695, asparagine 726, and asparagine 748 each carry an N-linked (GlcNAc...) asparagine glycan. Residues 838–860 traverse the membrane as a helical segment; that stretch reads AGLYVIVPVIISSSILLLGTLLI. Over 861–1163 the chain is Cytoplasmic; sequence LHQRMKKLFW…MENKMCDLTV (303 aa). The Box 1 motif motif lies at 869–877; the sequence is FWEDVPNPK. The residue at position 880 (serine 880) is a Phosphoserine. The interval 891–896 is required for JAK2 activation; it reads ETFEHL. A required for STAT3 phosphorylation region spans residues 896 to 904; that stretch reads LFIKHTASV. A Phosphotyrosine; by JAK2 modification is found at tyrosine 984. Tyrosine 1077 is subject to Phosphotyrosine. Tyrosine 1139 carries the post-translational modification Phosphotyrosine; by JAK2.

The protein belongs to the type I cytokine receptor family. Type 2 subfamily. As to quaternary structure, present as a mixture of monomers and dimers. The phosphorylated receptor binds a number of SH2 domain-containing proteins such as JAK2, STAT3, PTPN11, and SOCS3. Interaction with SOCS3 inhibits JAK/STAT signaling and MAPK cascade. On ligand binding, phosphorylated on two conserved C-terminal tyrosine residues (isoform B only) by JAK2. Tyr-984 is required for complete binding and activation of PTPN11, ERK/FOS activation and, for interaction with SOCS3. Phosphorylation on Tyr-1139 is required for STAT3 binding/activation. In terms of processing, on ligand binding, phosphorylated on two conserved C-terminal tyrosine residues (isoform B only) by JAK2. Tyr-984 is required for complete binding and activation of PTPN11, ERK/FOS activation,for interaction with SOCS3 and SOCS3 mediated inhibition of leptin signaling. Phosphorylation on Tyr-1139 is required for STAT3 binding/activation. Phosphorylation of Tyr-1077 has a more accessory role. In terms of tissue distribution, widely expressed. High expression of isoform B in liver, adipose tissue, hypothalamus and choroid plexus.

It localises to the cell membrane. It is found in the basolateral cell membrane. In terms of biological role, receptor for hormone LEP/leptin. On ligand binding, mediates LEP central and peripheral effects through the activation of different signaling pathways such as JAK2/STAT3 and MAPK cascade/FOS. In the hypothalamus, LEP acts as an appetite-regulating factor that induces a decrease in food intake and an increase in energy consumption by inducing anorexinogenic factors and suppressing orexigenic neuropeptides, also regulates bone mass and secretion of hypothalamo-pituitary-adrenal hormones. In the periphery, increases basal metabolism, influences reproductive function, regulates pancreatic beta-cell function and insulin secretion, is pro-angiogenic and affects innate and adaptive immunity. Control of energy homeostasis and melanocortin production (stimulation of POMC and full repression of AgRP transcription) is mediated by STAT3 signaling, whereas distinct signals regulate NPY and the control of fertility, growth and glucose homeostasis. Involved in the regulation of counter-regulatory response to hypoglycemia by inhibiting neurons of the parabrachial nucleus. Has a specific effect on T lymphocyte responses, differentially regulating the proliferation of naive and memory T-cells. Leptin increases Th1 and suppresses Th2 cytokine production. May transport LEP across the blood-brain barrier. Binds LEP and mediates LEP endocytosis. Does not induce phosphorylation of and activate STAT3. This is Leptin receptor (LEPR) from Macaca mulatta (Rhesus macaque).